The sequence spans 340 residues: Ribosomal RNA small subunit methyltransferase C (340 aa).

The protein belongs to the methyltransferase superfamily. RsmC family. In terms of assembly, monomer.

It is found in the cytoplasm. The enzyme catalyses guanosine(1207) in 16S rRNA + S-adenosyl-L-methionine = N(2)-methylguanosine(1207) in 16S rRNA + S-adenosyl-L-homocysteine + H(+). In terms of biological role, specifically methylates the guanine in position 1207 of 16S rRNA in the 30S particle. This chain is Ribosomal RNA small subunit methyltransferase C, found in Vibrio vulnificus (strain CMCP6).